We begin with the raw amino-acid sequence, 97 residues long: MFCVIYRSSKRDQTYLYVEKKDDFSRVPEDLMKGFGQPTLAMILPLDGRKKLVNADLEKVKQALTDQGYYLQLPPPPEDLLKQHLSAPGENKPDAKS.

Positions 1 to 85 (MFCVIYRSSK…PPEDLLKQHL (85 aa)) constitute a YcgL domain. Residues 74-97 (PPPPEDLLKQHLSAPGENKPDAKS) are disordered.

The chain is YcgL domain-containing protein CKO_01183 from Citrobacter koseri (strain ATCC BAA-895 / CDC 4225-83 / SGSC4696).